A 759-amino-acid chain; its full sequence is Fidgetin (759 aa).

Disordered stretches follow at residues Ser-89 to Pro-111, Ser-200 to Asn-237, Val-258 to Tyr-293, and Ser-337 to Glu-429. 2 stretches are compositionally biased toward pro residues: residues Gln-221 to Leu-232 and Gly-266 to Thr-289. Composition is skewed to polar residues over residues Ser-337–Pro-347 and Leu-382–Ser-418. Residue Thr-400 is modified to Phosphothreonine. Residues Ala-489 and Gly-529–Leu-534 each bind ATP.

Belongs to the AAA ATPase family. As to quaternary structure, interacts with AKAP8 (via C-terminus). In terms of tissue distribution, widely expressed.

It localises to the nucleus matrix. The protein localises to the cytoplasm. Its subcellular location is the cytoskeleton. The protein resides in the microtubule organizing center. It is found in the centrosome. In terms of biological role, ATP-dependent microtubule severing protein. Severs microtubules along their length and depolymerizes their ends, primarily the minus-end, suppressing microtubule growth from and attachment to centrosomes. Microtubule severing may promote rapid reorganization of cellular microtubule arrays and the release of microtubules from the centrosome following nucleation. Microtubule release from the mitotic spindle poles may allow depolymerization of the microtubule end proximal to the spindle pole, leading to poleward microtubule flux and poleward motion of chromosome. The polypeptide is Fidgetin (Fign) (Mus musculus (Mouse)).